A 152-amino-acid chain; its full sequence is Transcription elongation factor Spt5 (152 aa).

The KOW domain maps to 94 to 124 (PGDLVEVIAGPFKGQKAKVVKIDESKDEVVV).

The protein belongs to the archaeal Spt5 family. As to quaternary structure, heterodimer composed of Spt4 and Spt5. Interacts with RNA polymerase (RNAP) independently of nucleic acids. Forms a homodimer in solution.

Its function is as follows. Stimulates transcription elongation. This chain is Transcription elongation factor Spt5, found in Pyrococcus furiosus (strain ATCC 43587 / DSM 3638 / JCM 8422 / Vc1).